The following is a 469-amino-acid chain: 6-phospho-beta-galactosidase (469 aa).

Residues Gln19, His116, Asn159, Glu160, and Asn297 each coordinate D-galactose 6-phosphate. Catalysis depends on Glu160, which acts as the Proton donor. Glu375 (nucleophile) is an active-site residue. 4 residues coordinate D-galactose 6-phosphate: Ser428, Trp429, Lys435, and Tyr437.

It belongs to the glycosyl hydrolase 1 family.

It catalyses the reaction a 6-phospho-beta-D-galactoside + H2O = D-galactose 6-phosphate + an alcohol. The protein operates within carbohydrate metabolism; lactose degradation; D-galactose 6-phosphate and beta-D-glucose from lactose 6-phosphate: step 1/1. In Streptococcus equi subsp. zooepidemicus (strain H70), this protein is 6-phospho-beta-galactosidase.